Reading from the N-terminus, the 323-residue chain is Elongation factor P--(R)-beta-lysine ligase (323 aa).

74 to 76 contributes to the substrate binding site; that stretch reads SPE. Residues 98 to 100 and Asn107 contribute to the ATP site; that span reads RNE. Tyr116 serves as a coordination point for substrate. 242 to 243 is an ATP binding site; the sequence is EL. Substrate is bound at residue Glu249. An ATP-binding site is contributed by Gly298.

Belongs to the class-II aminoacyl-tRNA synthetase family. EpmA subfamily. Homodimer.

It carries out the reaction D-beta-lysine + L-lysyl-[protein] + ATP = N(6)-((3R)-3,6-diaminohexanoyl)-L-lysyl-[protein] + AMP + diphosphate + H(+). With EpmB is involved in the beta-lysylation step of the post-translational modification of translation elongation factor P (EF-P). Catalyzes the ATP-dependent activation of (R)-beta-lysine produced by EpmB, forming a lysyl-adenylate, from which the beta-lysyl moiety is then transferred to the epsilon-amino group of a conserved specific lysine residue in EF-P. This chain is Elongation factor P--(R)-beta-lysine ligase, found in Vibrio parahaemolyticus serotype O3:K6 (strain RIMD 2210633).